A 565-amino-acid chain; its full sequence is Oxygen-dependent choline dehydrogenase (565 aa).

Residue 6–35 (DYIIIGAGSAGNVLATRLTEDADVSVLLLE) participates in FAD binding. H475 (proton acceptor) is an active-site residue. The disordered stretch occupies residues 541–565 (RSNAPYFVAGERPVRGQPQRAVSAA).

The protein belongs to the GMC oxidoreductase family. It depends on FAD as a cofactor.

It catalyses the reaction choline + A = betaine aldehyde + AH2. The catalysed reaction is betaine aldehyde + NAD(+) + H2O = glycine betaine + NADH + 2 H(+). It participates in amine and polyamine biosynthesis; betaine biosynthesis via choline pathway; betaine aldehyde from choline (cytochrome c reductase route): step 1/1. In terms of biological role, involved in the biosynthesis of the osmoprotectant glycine betaine. Catalyzes the oxidation of choline to betaine aldehyde and betaine aldehyde to glycine betaine at the same rate. The chain is Oxygen-dependent choline dehydrogenase from Ectopseudomonas mendocina (strain ymp) (Pseudomonas mendocina).